Reading from the N-terminus, the 439-residue chain is Methylenetetrahydrofolate--tRNA-(uracil-5-)-methyltransferase TrmFO (439 aa).

9–14 (GAGLAG) provides a ligand contact to FAD.

It belongs to the MnmG family. TrmFO subfamily. Requires FAD as cofactor.

The protein resides in the cytoplasm. The catalysed reaction is uridine(54) in tRNA + (6R)-5,10-methylene-5,6,7,8-tetrahydrofolate + NADH + H(+) = 5-methyluridine(54) in tRNA + (6S)-5,6,7,8-tetrahydrofolate + NAD(+). The enzyme catalyses uridine(54) in tRNA + (6R)-5,10-methylene-5,6,7,8-tetrahydrofolate + NADPH + H(+) = 5-methyluridine(54) in tRNA + (6S)-5,6,7,8-tetrahydrofolate + NADP(+). In terms of biological role, catalyzes the folate-dependent formation of 5-methyl-uridine at position 54 (M-5-U54) in all tRNAs. This Lactobacillus delbrueckii subsp. bulgaricus (strain ATCC BAA-365 / Lb-18) protein is Methylenetetrahydrofolate--tRNA-(uracil-5-)-methyltransferase TrmFO.